The primary structure comprises 373 residues: Homoserine O-acetyltransferase (373 aa).

One can recognise an AB hydrolase-1 domain in the interval 46 to 355; that stretch reads NAILICHPLT…NPNGHDSFLL (310 aa). The Nucleophile role is filled by serine 151. Substrate is bound at residue arginine 221. Catalysis depends on residues aspartate 317 and histidine 350. Residue aspartate 351 participates in substrate binding.

It belongs to the AB hydrolase superfamily. MetX family. As to quaternary structure, homodimer.

The protein localises to the cytoplasm. The catalysed reaction is L-homoserine + acetyl-CoA = O-acetyl-L-homoserine + CoA. It participates in amino-acid biosynthesis; L-methionine biosynthesis via de novo pathway; O-acetyl-L-homoserine from L-homoserine: step 1/1. In terms of biological role, transfers an acetyl group from acetyl-CoA to L-homoserine, forming acetyl-L-homoserine. This is Homoserine O-acetyltransferase from Zymomonas mobilis subsp. mobilis (strain ATCC 31821 / ZM4 / CP4).